A 714-amino-acid polypeptide reads, in one-letter code: Fatty acid oxidation complex subunit alpha (714 aa).

The enoyl-CoA hydratase stretch occupies residues 1 to 190 (MEMASAFTLN…KLGLVDDVVP (190 aa)). The interval 306-714 (APLNSVGILG…FWKTTATDLQ (409 aa)) is 3-hydroxyacyl-CoA dehydrogenase.

The protein in the N-terminal section; belongs to the enoyl-CoA hydratase/isomerase family. In the central section; belongs to the 3-hydroxyacyl-CoA dehydrogenase family. As to quaternary structure, heterotetramer of two alpha chains (FadJ) and two beta chains (FadI).

The protein localises to the cytoplasm. It carries out the reaction a (3S)-3-hydroxyacyl-CoA = a (2E)-enoyl-CoA + H2O. The enzyme catalyses a 4-saturated-(3S)-3-hydroxyacyl-CoA = a (3E)-enoyl-CoA + H2O. It catalyses the reaction a (3S)-3-hydroxyacyl-CoA + NAD(+) = a 3-oxoacyl-CoA + NADH + H(+). The catalysed reaction is (3S)-3-hydroxybutanoyl-CoA = (3R)-3-hydroxybutanoyl-CoA. It functions in the pathway lipid metabolism; fatty acid beta-oxidation. Catalyzes the formation of a hydroxyacyl-CoA by addition of water on enoyl-CoA. Also exhibits 3-hydroxyacyl-CoA epimerase and 3-hydroxyacyl-CoA dehydrogenase activities. The protein is Fatty acid oxidation complex subunit alpha of Shigella boydii serotype 18 (strain CDC 3083-94 / BS512).